The following is a 317-amino-acid chain: MAKNPPENCEGCHILNAEALKSKKIRKSLKICGLVFGILALTLIVLFWGSKHFWPEVSKKTYGMEHTFYSNGEKKKISMEIDPITRTEIFRSGNGTDETLEVHDFKNGYTGIYFVGLQKCFIKTQIKVIPEFSEPEEEIDENEEITTTFFEQSVIWVPAEKPIENRDFLKNSKILEICDNVTMYWINPTLIAVSELQDFEEDGEDLHFPTSEKKGIDQNEQWVVPQVKVEKTRRTRQASEEDLPVNDYTENGIEFDPMLDERGYCCIYCRRGNRYCRRVCEPLLGYYPYPYCYQGGRVICRVIMPCNWWVARMLGRV.

Residues 1 to 30 are Cytoplasmic-facing; that stretch reads MAKNPPENCEGCHILNAEALKSKKIRKSLK. Residues 31 to 50 traverse the membrane as a helical; Signal-anchor for type II membrane protein segment; that stretch reads ICGLVFGILALTLIVLFWGS. Residues 51–317 lie on the Extracellular side of the membrane; it reads KHFWPEVSKK…WWVARMLGRV (267 aa). A BRICHOS domain is found at 93 to 186; that stretch reads GNGTDETLEV…ICDNVTMYWI (94 aa). An N-linked (GlcNAc...) asparagine glycan is attached at N94. Cysteines 120 and 178 form a disulfide. A glycan (N-linked (GlcNAc...) asparagine) is linked at N180. Residue S239 is modified to Phosphoserine.

It belongs to the chondromodulin-1 family. Highly expressed in tendons.

It is found in the membrane. Its subcellular location is the nucleus envelope. May be an angiogenesis inhibitor. In Rattus norvegicus (Rat), this protein is Tenomodulin (Tnmd).